A 134-amino-acid polypeptide reads, in one-letter code: Interleukin-5 (134 aa).

The N-terminal stretch at 1–21 (MRMHLHLTLVALGAAYVCANA) is a signal peptide. 2 N-linked (GlcNAc...) asparagine glycosylation sites follow: N76 and N90.

Belongs to the IL-5 family. In terms of assembly, homodimer; disulfide-linked. Interacts with IL5RA. Interacts with CSF2RB.

The protein resides in the secreted. Its function is as follows. Homodimeric cytokine expressed predominantly by T-lymphocytes and NK cells that plays an important role in the survival, differentiation, and chemotaxis of eosinophils. Also acts on activated and resting B-cells to induce immunoglobulin production, growth, and differentiation. Mechanistically, exerts its biological effects through a receptor composed of IL5RA subunit and the cytokine receptor common subunit beta/CSF2RB. Binding to the receptor leads to activation of various kinases including LYN, SYK and JAK2 and thereby propagates signals through the RAS-MAPK and JAK-STAT5 pathways respectively. The polypeptide is Interleukin-5 (IL5) (Bos taurus (Bovine)).